The primary structure comprises 70 residues: ATP synthase subunit epsilon, mitochondrial (70 aa).

Belongs to the eukaryotic ATPase epsilon family. F-type ATPases have 2 components, CF(1) - the catalytic core - and CF(0) - the membrane proton channel. CF(1) has five subunits: alpha(3), beta(3), gamma(1), delta(1), epsilon(1). CF(0) has three main subunits: a, b and c.

It is found in the mitochondrion. The protein resides in the mitochondrion inner membrane. In terms of biological role, mitochondrial membrane ATP synthase (F(1)F(0) ATP synthase or Complex V) produces ATP from ADP in the presence of a proton gradient across the membrane which is generated by electron transport complexes of the respiratory chain. F-type ATPases consist of two structural domains, F(1) - containing the extramembraneous catalytic core, and F(0) - containing the membrane proton channel, linked together by a central stalk and a peripheral stalk. During catalysis, ATP synthesis in the catalytic domain of F(1) is coupled via a rotary mechanism of the central stalk subunits to proton translocation. Part of the complex F(1) domain and of the central stalk which is part of the complex rotary element. Rotation of the central stalk against the surrounding alpha(3)beta(3) subunits leads to hydrolysis of ATP in three separate catalytic sites on the beta subunits. The sequence is that of ATP synthase subunit epsilon, mitochondrial from Zea mays (Maize).